A 242-amino-acid polypeptide reads, in one-letter code: Biosynthetic peptidoglycan transglycosylase (242 aa).

The chain crosses the membrane as a helical span at residues 19 to 39 (LMVVLAVFWGGGIALFSVAPV).

It belongs to the glycosyltransferase 51 family.

The protein localises to the cell inner membrane. It carries out the reaction [GlcNAc-(1-&gt;4)-Mur2Ac(oyl-L-Ala-gamma-D-Glu-L-Lys-D-Ala-D-Ala)](n)-di-trans,octa-cis-undecaprenyl diphosphate + beta-D-GlcNAc-(1-&gt;4)-Mur2Ac(oyl-L-Ala-gamma-D-Glu-L-Lys-D-Ala-D-Ala)-di-trans,octa-cis-undecaprenyl diphosphate = [GlcNAc-(1-&gt;4)-Mur2Ac(oyl-L-Ala-gamma-D-Glu-L-Lys-D-Ala-D-Ala)](n+1)-di-trans,octa-cis-undecaprenyl diphosphate + di-trans,octa-cis-undecaprenyl diphosphate + H(+). It functions in the pathway cell wall biogenesis; peptidoglycan biosynthesis. Its function is as follows. Peptidoglycan polymerase that catalyzes glycan chain elongation from lipid-linked precursors. This is Biosynthetic peptidoglycan transglycosylase from Shigella dysenteriae serotype 1 (strain Sd197).